The sequence spans 533 residues: NAD(P)H-quinone oxidoreductase chain 4 2 (533 aa).

Transmembrane regions (helical) follow at residues 5 to 25, 33 to 53, 86 to 106, 114 to 134, 135 to 155, 168 to 188, 208 to 228, 242 to 262, 276 to 296, 310 to 330, 331 to 351, 384 to 404, 416 to 436, and 462 to 482; these read FPWL…IPVL, VRWY…MVFW, LAVP…FAAW, LFYF…AAQD, LILF…LISI, FILY…GMAF, ALEL…LPIF, SAPV…YGLI, FAPV…LTAF, ISHM…GLNG, AMLQ…LAGV, ASLA…FLGL, VGVI…LLSM, and TFIA…PKVA.

Belongs to the complex I subunit 4 family.

The protein resides in the cellular thylakoid membrane. The enzyme catalyses a plastoquinone + NADH + (n+1) H(+)(in) = a plastoquinol + NAD(+) + n H(+)(out). The catalysed reaction is a plastoquinone + NADPH + (n+1) H(+)(in) = a plastoquinol + NADP(+) + n H(+)(out). In terms of biological role, NDH-1 shuttles electrons from NAD(P)H, via FMN and iron-sulfur (Fe-S) centers, to quinones in the respiratory chain. The immediate electron acceptor for the enzyme in this species is believed to be plastoquinone. Couples the redox reaction to proton translocation (for every two electrons transferred, four hydrogen ions are translocated across the cytoplasmic membrane), and thus conserves the redox energy in a proton gradient. This is NAD(P)H-quinone oxidoreductase chain 4 2 from Thermosynechococcus vestitus (strain NIES-2133 / IAM M-273 / BP-1).